An 812-amino-acid chain; its full sequence is Ras guanine nucleotide exchange factor J (812 aa).

2 stretches are compositionally biased toward low complexity: residues 1–36 (MSNPVSINNSGSISNSNLNNESLSPSRLSSSPNSKS) and 53–65 (LLNRSSSGNNLNN). The segment at 1 to 146 (MSNPVSINNS…GGSSGGLNMS (146 aa)) is disordered. A compositionally biased stretch (polar residues) spans 75-86 (SFTSNYQNIYTP). Residues 87–101 (NNNSYNSSNNNNNNN) are compositionally biased toward low complexity. The segment covering 131–141 (NSGGGGGGSSG) has biased composition (gly residues). One can recognise a LisH domain in the interval 214–246 (GRDTMLQLILQHLQFEGLMDSRKLLEEEARVQY). A disordered region spans residues 320–382 (IIYVDDKEKE…NNSIGNSNSY (63 aa)). Residues 323–343 (VDDKEKEKEKEKEKEKEKDKF) show a composition bias toward basic and acidic residues. A compositionally biased stretch (low complexity) spans 344–382 (GPNSTNSLSGSGSSPNIPSGMNNNSSSIGNNSIGNSNSY). Positions 409–535 (NKPQVKAASL…LSESLNAKIK (127 aa)) constitute an N-terminal Ras-GEF domain. The Ras-GEF domain maps to 573-804 (DEEEIARQLT…YSRSMSFEPR (232 aa)).

Promotes the exchange of Ras-bound GDP by GTP. In Dictyostelium discoideum (Social amoeba), this protein is Ras guanine nucleotide exchange factor J (gefJ).